Reading from the N-terminus, the 350-residue chain is Outer membrane protein A (350 aa).

A signal peptide spans 1–21 (MKKTAIAIAVALAGFATVAQA). Transmembrane regions (beta stranded) follow at residues 27 to 37 (TWYAGGKLGWS), 59 to 70 (QLGAGAFGGYQV), 74 to 82 (LGFEMGYDW), 100 to 111 (QAVQLTAKLGYP), 116 to 124 (LDIYTRLGG), 146 to 155 (PVFAGGVEWA), 160 to 167 (IATRLEYQ), and 186 to 194 (MLSVGVSYR). Tandem repeats lie at residues 205-206 (AP), 207-208 (AP), 209-210 (AP), and 211-212 (AP). The 4 X 2 AA tandem repeats of A-P stretch occupies residues 205–212 (APAPAPAP). An OmpA-like domain is found at 214–342 (VTTKTFTLKS…RVAIEVKGYK (129 aa)). A disulfide bridge connects residues C315 and C327.

It belongs to the outer membrane OOP (TC 1.B.6) superfamily. OmpA family. As to quaternary structure, monomer and homodimer.

The protein localises to the cell outer membrane. In terms of biological role, with TolR probably plays a role in maintaining the position of the peptidoglycan cell wall in the periplasm. Acts as a porin with low permeability that allows slow penetration of small solutes; an internal gate slows down solute passage. Its function is as follows. Required for conjugation with F-type plasmids; probably serves as the mating receptor on recipient cells. The polypeptide is Outer membrane protein A (Klebsiella aerogenes (Enterobacter aerogenes)).